The chain runs to 753 residues: Lysyl oxidase homolog 3 (753 aa).

An N-terminal signal peptide occupies residues 1–25 (MRPVSVWQWSPWGLLLCLLCSSCLG). SRCR domains are found at residues 44-145 (FRLA…VICK) and 169-282 (VRIR…VSCV). Cystine bridges form between C70–C134, C83–C144, C114–C124, C201–C271, C214–C281, and C248–C258. A glycan (N-linked (GlcNAc...) asparagine) is linked at N111. Residue N266 is glycosylated (N-linked (GlcNAc...) asparagine). A compositionally biased stretch (low complexity) spans 290–302 (SSGQKKQQQSKPQ). The disordered stretch occupies residues 290–315 (SSGQKKQQQSKPQGEARVRLKGGAHP). SRCR domains are found at residues 307–407 (VRLK…VRCN) and 417–525 (IRLS…VICS). Intrachain disulfides connect C332/C396, C345/C406, C376/C386, C446/C511, C459/C524, C492/C502, C554/C560, C606/C654, C638/C644, C666/C676, and C713/C727. N-linked (GlcNAc...) asparagine glycosylation is found at N390 and N481. The interval 529–732 (SDLLLHSALV…WVHNCHIGDA (204 aa)) is lysyl-oxidase like. Cu cation-binding residues include H607, H609, and H611. A glycan (N-linked (GlcNAc...) asparagine) is linked at N625. The segment at residues 634–670 (KASFCLEDTECQEDVSKRYECANFGEQGITVGCWDLY) is a cross-link (lysine tyrosylquinone (Lys-Tyr)). Y670 carries the post-translational modification 2',4',5'-topaquinone.

This sequence belongs to the lysyl oxidase family. In terms of assembly, interacts with STAT3. Cu cation is required as a cofactor. Lysine tyrosylquinone residue serves as cofactor. In terms of processing, the lysine tyrosylquinone cross-link (LTQ) is generated by condensation of the epsilon-amino group of a lysine with a topaquinone produced by oxidation of tyrosine. As to expression, isoform 1: Predominantly detected in the heart, placenta, lung, and small intestine. Isoform 2: Highly detected in the kidney, pancreas, spleen, and thymus, and is absent in lung. In eye, present in all layers of corneas as well as in the limbus and conjunctiva (at protein level).

It localises to the secreted. It is found in the extracellular space. Its subcellular location is the cytoplasm. The protein resides in the nucleus. It carries out the reaction L-lysyl-[protein] + O2 + H2O = (S)-2-amino-6-oxohexanoyl-[protein] + H2O2 + NH4(+). The catalysed reaction is N(6)-acetyl-L-lysyl-[protein] + O2 + H2O = acetamide + (S)-2-amino-6-oxohexanoyl-[protein] + H2O2. Its function is as follows. Protein-lysine 6-oxidase that mediates the oxidation of peptidyl lysine residues to allysine in target proteins. Catalyzes the post-translational oxidative deamination of peptidyl lysine residues in precursors of elastin and different types of collagens, a prerequisite in the formation of cross-links between collagens and elastin. Required for somite boundary formation by catalyzing oxidation of fibronectin (FN1), enhancing integrin signaling in myofibers and their adhesion to the myotendinous junction (MTJ). Acts as a regulator of inflammatory response by inhibiting differentiation of naive CD4(+) T-cells into T-helper Th17 or regulatory T-cells (Treg): acts by interacting with STAT3 in the nucleus and catalyzing both deacetylation and oxidation of lysine residues on STAT3, leading to disrupt STAT3 dimerization and inhibit STAT3 transcription activity. Oxidation of lysine residues to allysine on STAT3 preferentially takes place on lysine residues that are acetylated. Also able to catalyze deacetylation of lysine residues on STAT3. Functionally, shows protein-lysine 6-oxidase activity toward elastin and different types of collagens, with the highest activity toward collagen type VIII. In terms of biological role, shows protein-lysine 6-oxidase activity toward elastin and different types of collagens, with the highest activity toward collagen type IV. The chain is Lysyl oxidase homolog 3 from Homo sapiens (Human).